We begin with the raw amino-acid sequence, 625 residues long: MAPRARRRRQLPAPLLALCVLLVPLQVTLQVTPPCTQERHYEHLGRCCSRCEPGKYLSSKCTPTSDSVCLPCGPDEYLDTWNEEDKCLLHKVCDAGKALVAVDPGNHTAPRRCACTAGYHWNSDCECCRRNTECAPGFGAQHPLQLNKDTVCTPCLLGFFSDVFSSTDKCKPWTNCTLLGKLEAHQGTTESDVVCSSSMTLRRPPKEAQAYLPSLIVLLLFISVVVVAAIIFGVYYRKGGKALTANLWNWVNDACSSLSGNKESSGDRCAGSHSATSSQQEVCEGILLMTREEKMVPEDGAGVCGPVCAAGGPWAEVRDSRTFTLVSEVETQGDLSRKIPTEDEYTDRPSQPSTGSLLLIQQGSKSIPPFQEPLEVGENDSLSQCFTGTESTVDSEGCDFTEPPSRTDSMPVSPEKHLTKEIEGDSCLPWVVSSNSTDGYTGSGNTPGEDHEPFPGSLKCGPLPQCAYSMGFPSEAAASMAEAGVRPQDRADERGASGSGSSPSDQPPASGNVTGNSNSTFISSGQVMNFKGDIIVVYVSQTSQEGPGSAEPESEPVGRPVQEETLAHRDSFAGTAPRFPDVCATGAGLQEQGAPRQKDGTSRPVQEQGGAQTSLHTQGSGQCAE.

A signal peptide spans 1-30; the sequence is MAPRARRRRQLPAPLLALCVLLVPLQVTLQ. At 31-214 the chain is on the extracellular side; that stretch reads VTPPCTQERH…PKEAQAYLPS (184 aa). Disulfide bonds link Cys-35–Cys-47, Cys-48–Cys-61, Cys-51–Cys-69, Cys-72–Cys-87, Cys-93–Cys-113, Cys-115–Cys-128, Cys-125–Cys-127, Cys-134–Cys-152, and Cys-155–Cys-170. TNFR-Cys repeat units follow at residues 35 to 69, 72 to 113, 115 to 152, and 155 to 195; these read CTQE…DSVC, CGPD…PRRC, CTAG…DTVC, and CLLG…DVVC. Residue Asn-106 is glycosylated (N-linked (GlcNAc...) asparagine). Residues Cys-134, Ala-135, Phe-138, Ser-161, and Val-163 each coordinate Na(+). The N-linked (GlcNAc...) asparagine glycan is linked to Asn-175. Residues Cys-176 and Cys-195 are joined by a disulfide bond. Residues 215–234 form a helical membrane-spanning segment; that stretch reads LIVLLLFISVVVVAAIIFGV. The Cytoplasmic portion of the chain corresponds to 235-625; it reads YYRKGGKALT…HTQGSGQCAE (391 aa). Disordered stretches follow at residues 331–356, 388–413, and 479–524; these read TQGD…STGS, GTES…MPVS, and SMAE…FISS. Positions 499–511 are enriched in low complexity; that stretch reads SGSSPSDQPPASG. The span at 512–524 shows a compositional bias: polar residues; sequence NVTGNSNSTFISS. The required for interaction with EEIG1 and osteoclast differentiation stretch occupies residues 532-537; the sequence is GDIIVV. The disordered stretch occupies residues 542-625; it reads TSQEGPGSAE…HTQGSGQCAE (84 aa). Over residues 543–558 the composition is skewed to low complexity; sequence SQEGPGSAEPESEPVG. The span at 561–571 shows a compositional bias: basic and acidic residues; sequence VQEETLAHRDS. Phosphoserine is present on Ser-571. The span at 603 to 625 shows a compositional bias: polar residues; the sequence is RPVQEQGGAQTSLHTQGSGQCAE.

Binds to the clefts between the subunits of the TNFSF11 ligand trimer to form a heterohexamer. Part of a complex composed of EEIG1, TNFRSF11A/RANK, PLCG2, GAB2, TEC and BTK; complex formation increases in the presence of TNFSF11/RANKL. Interacts with TRAF1, TRAF2, TRAF3, TRAF5 and TRAF6. Interacts (via cytoplasmic domain) with GAB2. Interacts (via cytoplasmic domain); with EEIG1 (via N-terminus); when in the presence of TNFSF11/RANKL. As to expression, ubiquitous expression with high levels in trabecular bone, thymus, small intestine, lung, brain and kidney. Weakly expressed in spleen and bone marrow.

Its subcellular location is the cell membrane. It localises to the membrane raft. In terms of biological role, receptor for TNFSF11/RANKL/TRANCE/OPGL; essential for RANKL-mediated osteoclastogenesis. Its interaction with EEIG1 promotes osteoclastogenesis via facilitating the transcription of NFATC1 and activation of PLCG2. Involved in the regulation of interactions between T-cells and dendritic cells. The chain is Tumor necrosis factor receptor superfamily member 11A (Tnfrsf11a) from Mus musculus (Mouse).